The following is a 138-amino-acid chain: Nucleoside diphosphate kinase (138 aa).

6 residues coordinate ATP: lysine 9, phenylalanine 57, arginine 85, threonine 91, arginine 102, and asparagine 112. Residue histidine 115 is the Pros-phosphohistidine intermediate of the active site.

Belongs to the NDK family. Homotetramer. Requires Mg(2+) as cofactor.

The protein localises to the cytoplasm. The enzyme catalyses a 2'-deoxyribonucleoside 5'-diphosphate + ATP = a 2'-deoxyribonucleoside 5'-triphosphate + ADP. It carries out the reaction a ribonucleoside 5'-diphosphate + ATP = a ribonucleoside 5'-triphosphate + ADP. Major role in the synthesis of nucleoside triphosphates other than ATP. The ATP gamma phosphate is transferred to the NDP beta phosphate via a ping-pong mechanism, using a phosphorylated active-site intermediate. This Desulforapulum autotrophicum (strain ATCC 43914 / DSM 3382 / VKM B-1955 / HRM2) (Desulfobacterium autotrophicum) protein is Nucleoside diphosphate kinase.